Reading from the N-terminus, the 449-residue chain is Clusterin (449 aa).

The first 21 residues, 1-21 (MKTLLLLVGLLLTLENGQVLG), serve as a signal peptide directing secretion. Positions 77–80 (KKKK) match the Nuclear localization signal motif. Asn-85 and Asn-102 each carry an N-linked (GlcNAc...) asparagine glycan. Intrachain disulfides connect Cys-101–Cys-313, Cys-112–Cys-305, Cys-115–Cys-302, Cys-120–Cys-295, and Cys-128–Cys-285. Phosphoserine is present on Ser-132. N-linked (GlcNAc...) asparagine glycosylation is found at Asn-144, Asn-291, Asn-328, Asn-354, and Asn-374. A Phosphoserine modification is found at Ser-396. The Nuclear localization signal signature appears at 443-447 (RQKNR).

This sequence belongs to the clusterin family. Antiparallel disulfide-linked heterodimer of an alpha chain and a beta chain. Self-associates and forms higher oligomers. Interacts with a broad range of misfolded proteins, including APP, APOC2 and LYZ. Slightly acidic pH promotes interaction with misfolded proteins. Forms high-molecular weight oligomers upon interaction with misfolded proteins. Interacts with APOA1, LRP2, CLUAP1 and PON1. Interacts with the complement membrane attack complex. Interacts (via alpha chain) with XRCC6. Interacts with SYVN1, COMMD1, BTRC, CUL1 and with ubiquitin and SCF (SKP1-CUL1-F-box protein) E3 ubiquitin-protein ligase complexes. Interacts (via alpha chain) with BAX in stressed cells, where BAX undergoes a conformation change leading to association with the mitochondrial membrane. Does not interact with BAX in unstressed cells. Found in a complex with LTF, CLU, EPPIN and SEMG1. Interacts (immaturely glycosylated pre-secreted form) with HSPA5; this interaction promotes CLU stability and facilitates stress-induced CLU retrotranslocation from the secretory pathway to the mitochondria, thereby reducing stress-induced apoptosis by stabilizing mitochondrial membrane integrity. Interacts with BCL2L1; this interaction releases and activates BAX and promotes cell death. Interacts with TGFBR2 and ACVR1. Interacts (secreted form) with STMN3; this interaction may act as an important modulator during neuronal differentiation. Interacts with VLDLR and LRP8. Proteolytically cleaved on its way through the secretory system, probably within the Golgi lumen. Proteolytic cleavage is not necessary for its chaperone activity. All non-secreted forms are not proteolytically cleaved. Chaperone activity of uncleaved forms is dependent on a non-reducing environment. In terms of processing, polyubiquitinated, leading to proteasomal degradation. Under cellular stress, the intracellular level of cleaved form is reduced due to proteasomal degradation. Post-translationally, heavily N-glycosylated. About 30% of the protein mass is comprised of complex N-linked carbohydrate. Endoplasmic reticulum (ER) stress induces changes in glycosylation status and increases level of hypoglycosylated forms. Core carbohydrates are essential for chaperone activity. Non-secreted forms are hypoglycosylated or unglycosylated.

It localises to the secreted. It is found in the nucleus. Its subcellular location is the cytoplasm. The protein resides in the mitochondrion membrane. The protein localises to the cytosol. It localises to the microsome. It is found in the endoplasmic reticulum. Its subcellular location is the mitochondrion. The protein resides in the perinuclear region. The protein localises to the cytoplasmic vesicle. It localises to the secretory vesicle. It is found in the chromaffin granule. In terms of biological role, functions as extracellular chaperone that prevents aggregation of non native proteins. Prevents stress-induced aggregation of blood plasma proteins. Inhibits formation of amyloid fibrils by APP, APOC2, B2M, CALCA, CSN3, SNCA and aggregation-prone LYZ variants (in vitro). Does not require ATP. Maintains partially unfolded proteins in a state appropriate for subsequent refolding by other chaperones, such as HSPA8/HSC70. Does not refold proteins by itself. Binding to cell surface receptors triggers internalization of the chaperone-client complex and subsequent lysosomal or proteasomal degradation. When secreted, protects cells against apoptosis and against cytolysis by complement: inhibits assembly of the complement membrane attack complex (MAC) by preventing polymerization of C9 pore component of the MAC complex. Intracellular forms interact with ubiquitin and SCF (SKP1-CUL1-F-box protein) E3 ubiquitin-protein ligase complexes and promote the ubiquitination and subsequent proteasomal degradation of target proteins. Promotes proteasomal degradation of COMMD1 and IKBKB. Modulates NF-kappa-B transcriptional activity. Following stress, promotes apoptosis. Inhibits apoptosis when associated with the mitochondrial membrane by interference with BAX-dependent release of cytochrome c into the cytoplasm. Plays a role in the regulation of cell proliferation. An intracellular form suppresses stress-induced apoptosis by stabilizing mitochondrial membrane integrity through interaction with HSPA5. Secreted form does not affect caspase or BAX-mediated intrinsic apoptosis and TNF-induced NF-kappa-B-activity. Secreted form act as an important modulator during neuronal differentiation through interaction with STMN3. Plays a role in the clearance of immune complexes that arise during cell injury. The polypeptide is Clusterin (CLU) (Equus caballus (Horse)).